Consider the following 83-residue polypeptide: Defensin-2 (83 aa).

A signal peptide spans 1-33 (MAGKGVGTPLSALFLLVLLVVTIGMMEVQVAEG). Intrachain disulfides connect Cys36–Cys82, Cys47–Cys67, Cys53–Cys76, and Cys57–Cys78.

Belongs to the DEFL family.

Its subcellular location is the secreted. Functionally, plant defense peptide. Has antifungal activity. This is Defensin-2 from Pinus sylvestris (Scotch pine).